The chain runs to 1603 residues: Vitellogenin-3 (1603 aa).

The N-terminal stretch at 1–15 is a signal peptide; sequence MKSIIIASLVALAIA. Residues 24 to 685 form the Vitellogenin domain; that stretch reads FSPKSEYVYK…EKNAFLPKEV (662 aa). N1266 carries N-linked (GlcNAc...) asparagine glycosylation. The VWFD domain occupies 1306-1475; sequence ATCKVGQSEV…SYLLKNEECE (170 aa). Intrachain disulfides connect C1308/C1438 and C1330/C1474.

Expressed in the intestine of adult hermaphrodites.

It is found in the secreted. Its function is as follows. Precursor of the egg-yolk proteins that are sources of nutrients during embryonic development. Together with other vitellogenins, may play a role in modulating life-span, acting via induction of autophagy and lysosomal lipolysis. The chain is Vitellogenin-3 (vit-3) from Caenorhabditis elegans.